Consider the following 758-residue polypeptide: 5-methyltetrahydropteroyltriglutamate--homocysteine methyltransferase (758 aa).

5-methyltetrahydropteroyltri-L-glutamate is bound by residues 17-20 (RELK) and Lys-113. L-homocysteine contacts are provided by residues 433 to 435 (IGS) and Glu-486. L-methionine contacts are provided by residues 433 to 435 (IGS) and Glu-486. 5-methyltetrahydropteroyltri-L-glutamate is bound by residues 517–518 (RC) and Trp-563. Asp-601 contacts L-homocysteine. An L-methionine-binding site is contributed by Asp-601. Glu-607 contacts 5-methyltetrahydropteroyltri-L-glutamate. Residues His-643, Cys-645, and Glu-667 each coordinate Zn(2+). Residue His-696 is the Proton donor of the active site. Cys-728 provides a ligand contact to Zn(2+).

The protein belongs to the vitamin-B12 independent methionine synthase family. Zn(2+) serves as cofactor.

It catalyses the reaction 5-methyltetrahydropteroyltri-L-glutamate + L-homocysteine = tetrahydropteroyltri-L-glutamate + L-methionine. Its pathway is amino-acid biosynthesis; L-methionine biosynthesis via de novo pathway; L-methionine from L-homocysteine (MetE route): step 1/1. In terms of biological role, catalyzes the transfer of a methyl group from 5-methyltetrahydrofolate to homocysteine resulting in methionine formation. This is 5-methyltetrahydropteroyltriglutamate--homocysteine methyltransferase from Nitrosomonas europaea (strain ATCC 19718 / CIP 103999 / KCTC 2705 / NBRC 14298).